Reading from the N-terminus, the 225-residue chain is Fibronectin type III domain-containing protein 10 (225 aa).

The N-terminal stretch at 1-19 (MRAPPLLLLLAACAPPSGA) is a signal peptide. Over 20-181 (AVDPTPPGWE…FTAEPAAMQE (162 aa)) the chain is Extracellular. A Fibronectin type-III domain is found at 72–167 (LASAGGSLRA…ELAAAPPELA (96 aa)). N-linked (GlcNAc...) asparagine glycosylation is found at Asn86 and Asn109. A helical transmembrane segment spans residues 182–202 (IVVAMTAVGGSICVMLVVICL). Residues 203–225 (LVAYITENLMHPTFRRPSLRRQP) are Cytoplasmic-facing.

The protein localises to the membrane. This is Fibronectin type III domain-containing protein 10 (Fndc10) from Rattus norvegicus (Rat).